We begin with the raw amino-acid sequence, 997 residues long: Mannuronan C5-epimerase AlgE5 (997 aa).

PbH1 repeat units follow at residues 133 to 155 (DRDV…DPHE), 157 to 179 (TINL…VADF), 180 to 202 (QIGG…NIVT), 204 to 226 (TNDF…VIQR), 257 to 279 (AHDV…RVYG), 280 to 315 (AEDV…GVSG), and 320 to 359 (TTGT…SVSN). 10 Hemolysin-type calcium-binding repeats span residues 388 to 403 (GTTG…AHET), 406 to 422 (GLDG…NDIL), 424 to 439 (GGAG…GADL), 557 to 573 (GHAG…DDIL), 574 to 590 (VGGA…GADL), 695 to 709 (GSAG…AADE), 712 to 729 (HGGA…ADVF), 828 to 839 (GSDGNDTLDGGS), 846 to 862 (GGAG…NDIL), and 864 to 880 (GGAG…SDIF).

Belongs to the D-mannuronate C5-epimerase family. Ca(2+) is required as a cofactor.

It localises to the secreted. It catalyses the reaction [(1-&gt;4)-beta-D-mannuronosyl](n) = [alginate](n). The protein operates within glycan biosynthesis; alginate biosynthesis. Its activity is regulated as follows. Inhibited by zinc. Converts beta-D-mannuronic acid (M) to alpha-L-guluronic acid (G), producing a polymer with gel-forming capacity, required for the formation of the cyst coat. This Azotobacter vinelandii protein is Mannuronan C5-epimerase AlgE5.